We begin with the raw amino-acid sequence, 389 residues long: Protein DDI1 homolog 1 (389 aa).

The segment at 109-132 (SSSSAQSAQRTRRVEQDDEGEKSM) is disordered. Aspartate 261 is a catalytic residue.

Belongs to the DDI1 family. As to expression, expressed in most tissues.

The protein resides in the cytoplasm. The protein localises to the nucleus. Aspartic protease. Required for the cleavage and activation of transcription factors such as isoform a of the transcription factor skn-1, which in turn regulates the expression of proteasomal subunits such as rpt-3. Plays a key role in the degradation of the potassium channel slo-1, perhaps acting directly, in cleaving slo-1 upstream of the ER-associated degradation pathway (ERAD), and also indirectly, via activation of the transcription factor skn-1, which mediates proteasomal homeostasis. This is Protein DDI1 homolog 1 from Caenorhabditis elegans.